The chain runs to 401 residues: Nicotinate phosphoribosyltransferase (401 aa).

His221 is modified (phosphohistidine; by autocatalysis).

Belongs to the NAPRTase family. In terms of processing, transiently phosphorylated on a His residue during the reaction cycle. Phosphorylation strongly increases the affinity for substrates and increases the rate of nicotinate D-ribonucleotide production. Dephosphorylation regenerates the low-affinity form of the enzyme, leading to product release.

It catalyses the reaction nicotinate + 5-phospho-alpha-D-ribose 1-diphosphate + ATP + H2O = nicotinate beta-D-ribonucleotide + ADP + phosphate + diphosphate. It functions in the pathway cofactor biosynthesis; NAD(+) biosynthesis; nicotinate D-ribonucleotide from nicotinate: step 1/1. Its function is as follows. Catalyzes the synthesis of beta-nicotinate D-ribonucleotide from nicotinate and 5-phospho-D-ribose 1-phosphate at the expense of ATP. The sequence is that of Nicotinate phosphoribosyltransferase from Edwardsiella ictaluri (strain 93-146).